We begin with the raw amino-acid sequence, 233 residues long: Transcriptional regulatory protein NatR (233 aa).

In terms of domain architecture, Response regulatory spans 3 to 117; it reads KVGLVDDYRV…RLAASFDRYL (115 aa). Position 54 is a 4-aspartylphosphate (Asp54). One can recognise an HTH LytTR-type domain in the interval 129–233; sequence ILIKQKSEMH…QLDYFQNYYF (105 aa).

In terms of processing, phosphorylated by NatK.

Its subcellular location is the cytoplasm. In terms of biological role, member of the two-component regulatory system NatK/NatR that positively regulates the expression of the natAB operon. Acts by binding directly to the promoter of natAB. This is Transcriptional regulatory protein NatR from Bacillus subtilis (strain 168).